The primary structure comprises 75 residues: Large ribosomal subunit protein bL31 (75 aa).

It belongs to the bacterial ribosomal protein bL31 family. Type A subfamily. As to quaternary structure, part of the 50S ribosomal subunit.

Its function is as follows. Binds the 23S rRNA. The chain is Large ribosomal subunit protein bL31 from Nitrobacter winogradskyi (strain ATCC 25391 / DSM 10237 / CIP 104748 / NCIMB 11846 / Nb-255).